A 117-amino-acid polypeptide reads, in one-letter code: Probable non-functional immunoglobulin heavy variable 1-38-4 (117 aa).

The first 19 residues, 1–19 (MDWNWRILFLVVATTGAHS), serve as a signal peptide directing secretion. The segment at 20 to 44 (QVQLVQSWAEVRKSGASVKVSCSFS) is framework-1. Positions 20–117 (QVQLVQSWAE…EDMAVYYYAR (98 aa)) constitute an Ig-like domain. The tract at residues 45-52 (GFTITSYG) is complementarity-determining-1. The segment at 53 to 69 (IHWVQQSPGQGLEWMGW) is framework-2. Positions 70 to 77 (INPGNGSP) are complementarity-determining-2. The N-linked (GlcNAc...) asparagine glycan is linked to Asn-74. Residues 78–115 (SYAKKFQGRFTMTRDMSTTTAYTDLSSLTSEDMAVYYY) form a framework-3 region. Residues 116–117 (AR) are complementarity-determining-3.

In terms of assembly, most probably, the immunoglobulin is not assembled due to incorrect folding of heavy chain. Immunoglobulins are composed of two identical heavy chains and two identical light chains; disulfide-linked.

It is found in the secreted. The protein resides in the cell membrane. Functionally, probable non-functional open reading frame (ORF) of V region of the variable domain of immunoglobulin heavy chains. Non-functional ORF generally cannot participate in the synthesis of a productive immunoglobulin chain due to altered V-(D)-J or switch recombination and/or splicing site (at mRNA level) and/or conserved amino acid change (protein level). Immunoglobulins, also known as antibodies, are membrane-bound or secreted glycoproteins produced by B lymphocytes. In the recognition phase of humoral immunity, the membrane-bound immunoglobulins serve as receptors which, upon binding of a specific antigen, trigger the clonal expansion and differentiation of B lymphocytes into immunoglobulins-secreting plasma cells. Secreted immunoglobulins mediate the effector phase of humoral immunity, which results in the elimination of bound antigens. The antigen binding site is formed by the variable domain of one heavy chain, together with that of its associated light chain. Thus, each immunoglobulin has two antigen binding sites with remarkable affinity for a particular antigen. The variable domains are assembled by a process called V-(D)-J rearrangement and can then be subjected to somatic hypermutations which, after exposure to antigen and selection, allow affinity maturation for a particular antigen. The polypeptide is Probable non-functional immunoglobulin heavy variable 1-38-4 (Homo sapiens (Human)).